Consider the following 130-residue polypeptide: Small ribosomal subunit protein uS11 (130 aa).

This sequence belongs to the universal ribosomal protein uS11 family. Part of the 30S ribosomal subunit. Interacts with proteins S7 and S18. Binds to IF-3.

In terms of biological role, located on the platform of the 30S subunit, it bridges several disparate RNA helices of the 16S rRNA. Forms part of the Shine-Dalgarno cleft in the 70S ribosome. The sequence is that of Small ribosomal subunit protein uS11 from Synechococcus sp. (strain WH7803).